A 626-amino-acid chain; its full sequence is Glutamine--fructose-6-phosphate aminotransferase [isomerizing] (626 aa).

Cysteine 2 serves as the catalytic Nucleophile; for GATase activity. Residues 2-222 (CGIVGYIGPQ…NGELARLTPT (221 aa)) form the Glutamine amidotransferase type-2 domain. 2 SIS domains span residues 293 to 441 (LPPS…QRQS) and 471 to 616 (YIEA…VDQP). Lysine 621 functions as the For Fru-6P isomerization activity in the catalytic mechanism.

In terms of assembly, homodimer.

The protein resides in the cytoplasm. It catalyses the reaction D-fructose 6-phosphate + L-glutamine = D-glucosamine 6-phosphate + L-glutamate. Catalyzes the first step in hexosamine metabolism, converting fructose-6P into glucosamine-6P using glutamine as a nitrogen source. The sequence is that of Glutamine--fructose-6-phosphate aminotransferase [isomerizing] from Thermosynechococcus vestitus (strain NIES-2133 / IAM M-273 / BP-1).